The sequence spans 262 residues: Octopine permease ATP-binding protein P (262 aa).

An ABC transporter domain is found at 9–254; that stretch reads VQLKDIRKNF…PRTDRFRQFL (246 aa). An ATP-binding site is contributed by 41 to 48; that stretch reads GSSGSGKS.

It belongs to the ABC transporter superfamily.

It localises to the cell inner membrane. Its function is as follows. Component of the octopine active transport system probably consisting of four subunits: Q, M, P and T. The polypeptide is Octopine permease ATP-binding protein P (occP) (Rhizobium radiobacter (Agrobacterium tumefaciens)).